Consider the following 251-residue polypeptide: Triosephosphate isomerase (251 aa).

9-11 (NWK) serves as a coordination point for substrate. His95 functions as the Electrophile in the catalytic mechanism. Catalysis depends on Glu167, which acts as the Proton acceptor. Substrate is bound by residues Gly173, Ser213, and 234–235 (GG).

It belongs to the triosephosphate isomerase family. As to quaternary structure, homodimer.

It is found in the cytoplasm. The enzyme catalyses D-glyceraldehyde 3-phosphate = dihydroxyacetone phosphate. It functions in the pathway carbohydrate biosynthesis; gluconeogenesis. Its pathway is carbohydrate degradation; glycolysis; D-glyceraldehyde 3-phosphate from glycerone phosphate: step 1/1. Its function is as follows. Involved in the gluconeogenesis. Catalyzes stereospecifically the conversion of dihydroxyacetone phosphate (DHAP) to D-glyceraldehyde-3-phosphate (G3P). The protein is Triosephosphate isomerase of Pelobacter propionicus (strain DSM 2379 / NBRC 103807 / OttBd1).